Consider the following 311-residue polypeptide: MTEVVKIYQLVENLSLEVVYGDEESLNRTIKTGEISRPGLELTGYFNYYSHDRLQLFGSKEITFAERMMPEERLLVMRRLCAKDTPAFIVSRGLEIPEELITAAKENGVSVLRSPISTSRLLGELSSYLDGRLAVRTSVHGVLVDVYGLGVLIQGDSGIGKSETALELIKRGHRLIADDRVDVYQQDELTVVGEPPKILQHLIEIRGIGIIDVMNLFGASAVRGFMQVQLVVYLEAWEKDKKYDRLGSDDAMVEIANVDVPQIRIPVKTGRNVAIIIEVAAMNFRAKTMGYDATKTFEERLTRLIEENSGE.

Catalysis depends on residues H140 and K161. Position 155 to 162 (155 to 162 (GDSGIGKS)) interacts with ATP. S162 provides a ligand contact to Mg(2+). The Proton acceptor; for phosphorylation activity. Proton donor; for dephosphorylation activity role is filled by D179. The tract at residues 203–212 (IEIRGIGIID) is important for the catalytic mechanism of both phosphorylation and dephosphorylation. A Mg(2+)-binding site is contributed by E204. R245 is a catalytic residue. Residues 266–271 (PVKTGR) form an important for the catalytic mechanism of dephosphorylation region.

This sequence belongs to the HPrK/P family. As to quaternary structure, homohexamer. The cofactor is Mg(2+).

The enzyme catalyses [HPr protein]-L-serine + ATP = [HPr protein]-O-phospho-L-serine + ADP + H(+). The catalysed reaction is [HPr protein]-O-phospho-L-serine + phosphate + H(+) = [HPr protein]-L-serine + diphosphate. Catalyzes the ATP- as well as the pyrophosphate-dependent phosphorylation of a specific serine residue in HPr, a phosphocarrier protein of the phosphoenolpyruvate-dependent sugar phosphotransferase system (PTS). HprK/P also catalyzes the pyrophosphate-producing, inorganic phosphate-dependent dephosphorylation (phosphorolysis) of seryl-phosphorylated HPr (P-Ser-HPr). The two antagonistic activities of HprK/P are regulated by several intracellular metabolites, which change their concentration in response to the absence or presence of rapidly metabolisable carbon sources (glucose, fructose, etc.) in the growth medium. Therefore, by controlling the phosphorylation state of HPr, HPrK/P is a sensor enzyme that plays a major role in the regulation of carbon metabolism and sugar transport: it mediates carbon catabolite repression (CCR), and regulates PTS-catalyzed carbohydrate uptake and inducer exclusion. The polypeptide is HPr kinase/phosphorylase (hprK) (Enterococcus faecalis (strain ATCC 700802 / V583)).